The primary structure comprises 164 residues: Endoribonuclease YbeY (164 aa).

Residues histidine 125, histidine 129, and histidine 135 each contribute to the Zn(2+) site.

It belongs to the endoribonuclease YbeY family. The cofactor is Zn(2+).

The protein resides in the cytoplasm. In terms of biological role, single strand-specific metallo-endoribonuclease involved in late-stage 70S ribosome quality control and in maturation of the 3' terminus of the 16S rRNA. The chain is Endoribonuclease YbeY from Paramagnetospirillum magneticum (strain ATCC 700264 / AMB-1) (Magnetospirillum magneticum).